Reading from the N-terminus, the 499-residue chain is Serine carboxypeptidase 1 (499 aa).

An N-terminal signal peptide occupies residues 1 to 30 (MARCRRRSGCTAGAALLLLLALALSGGGGA). Cystine bridges form between Cys-92–Cys-388, Cys-256–Cys-268, and Cys-291–Cys-355. A glycan (N-linked (GlcNAc...) asparagine) is linked at Asn-148. The active site involves Ser-188. Asn-262 carries N-linked (GlcNAc...) asparagine glycosylation. A propeptide spans 297–351 (IKEVNLQNSKLPQSFKDLGTTNKPFPVRTRMLGRAWPLRAPVKAGRVPSWQEVAS) (linker peptide). Asn-407 is a glycosylation site (N-linked (GlcNAc...) asparagine). Catalysis depends on residues Asp-423 and His-476. Positions 497–499 (SKL) match the Microbody targeting signal motif.

The protein belongs to the peptidase S10 family. In terms of assembly, carboxypeptidase I is a dimer, where each monomer is composed of two chains linked by disulfide bonds. The linker peptide is endoproteolytically excised during enzyme maturation.

Its subcellular location is the secreted. It carries out the reaction Release of a C-terminal amino acid with broad specificity.. Functionally, may be involved in the degradation of small peptides (2-5 residues) or in the degradation of storage proteins in the embryo. The polypeptide is Serine carboxypeptidase 1 (CBP1) (Hordeum vulgare (Barley)).